We begin with the raw amino-acid sequence, 321 residues long: NADH-ubiquinone oxidoreductase chain 1 (321 aa).

A run of 8 helical transmembrane segments spans residues 6 to 26 (IVPPALLIISILMAVAFLTAL), 67 to 87 (LLATPTLFILAPTAALMLALA), 103 to 123 (LGLLLLLAMSSLMVYSFLWSG), 143 to 163 (ISYEVTLAIIVLSIVLLSGGF), 174 to 194 (PLYLALATWPSMMMWYTSTLA), 220 to 240 (ASPFALFFLAEYANIMLMNTL), 256 to 276 (ALFTIALMSKALLLTMSFLWV), and 296 to 316 (FLPMTLTLCLWHSSVPMSMFG).

This sequence belongs to the complex I subunit 1 family.

It localises to the mitochondrion inner membrane. It carries out the reaction a ubiquinone + NADH + 5 H(+)(in) = a ubiquinol + NAD(+) + 4 H(+)(out). Its function is as follows. Core subunit of the mitochondrial membrane respiratory chain NADH dehydrogenase (Complex I) that is believed to belong to the minimal assembly required for catalysis. Complex I functions in the transfer of electrons from NADH to the respiratory chain. The immediate electron acceptor for the enzyme is believed to be ubiquinone. The sequence is that of NADH-ubiquinone oxidoreductase chain 1 (MT-ND1) from Alligator mississippiensis (American alligator).